The sequence spans 192 residues: Thymidine kinase (192 aa).

Residues 9–16 and 87–90 contribute to the ATP site; these read STMNAGKS and DEAQ. The Proton acceptor role is filled by glutamate 88. The Zn(2+) site is built by cysteine 145, cysteine 147, cysteine 182, and histidine 185.

This sequence belongs to the thymidine kinase family. As to quaternary structure, homotetramer.

It is found in the cytoplasm. It carries out the reaction thymidine + ATP = dTMP + ADP + H(+). This chain is Thymidine kinase, found in Pasteurella multocida (strain Pm70).